A 773-amino-acid chain; its full sequence is Mitochondrial 15S rRNA processing factor CCM1 (773 aa).

Residues 1–23 (MLRARLLVPLVRPALVHRLDRCY) constitute a mitochondrion transit peptide. Basic and acidic residues predominate over residues 89 to 106 (AAEATEQHKELPPAEQER). Positions 89 to 122 (AAEATEQHKELPPAEQERPSGANTHTAPIKHDTK) are disordered. PPR repeat units follow at residues 220–254 (SAIT…NITP), 255–285 (TVHT…LKLA), 294–328 (NQVI…SLET), 331–365 (TAHT…SVAN), and 366–400 (VRTY…HSES).

This sequence belongs to the CCM1 family. As to quaternary structure, binds to mitochondrial small subunit 15S rRNA.

Its subcellular location is the mitochondrion. In terms of biological role, regulates mitochondrial small subunit maturation by controlling 15S rRNA 5'-end processing. Localizes to the 5' precursor of the 15S rRNA in a position that is subsequently occupied by mS47 in the mature yeast mtSSU. Uses structure and sequence-specific RNA recognition, binding to a single-stranded region of the precursor and specifically recognizing bases -6 to -1. The exchange of Ccm1 for mS47 is coupled to the irreversible removal of precursor rRNA that is accompanied by conformational changes of the mitoribosomal proteins uS5m and mS26. These conformational changes signal completion of 5'-end rRNA processing through protection of the mature 5'-end of the 15S rRNA and stabilization of mS47. The removal of the 5' precursor together with the dissociation of Ccm1 may be catalyzed by the 5'-3' exoribonuclease Pet127. Involved in the specific removal of group I introns in mitochondrial encoded transcripts. The polypeptide is Mitochondrial 15S rRNA processing factor CCM1 (CCM1) (Yarrowia lipolytica (strain CLIB 122 / E 150) (Yeast)).